Consider the following 139-residue polypeptide: GSK3B-interacting protein (139 aa).

The disordered stretch occupies residues Met1 to Leu22. The segment at Val41–Leu45 is required for PRKAR2A interaction; contributes to a protective effect against H(2)O(2)-induced apoptosis. Residues Ser115–Ser139 form an interaction with GSK3B and acts as a GSK3B inhibitor region.

The protein belongs to the GSKIP family. Forms a complex composed of PRKAR2A or PRKAR2B, GSK3B and GSKIP through GSKIP interaction; facilitates PKA-induced phosphorylation of GSK3B leading to GSK3B inactivation; recruits DNM1L through GSK3B for PKA-mediated phosphorylation of DNM1L; promotes beta-catenin degradation through GSK3B-induced phosphorylation of beta-catenin; stabilizes beta-catenin and enhances Wnt-induced signaling through PKA-induced phosphorylation of beta-catenin. Interacts with GSK3B; induces GSK3B-mediated phosphorylation of GSKIP and inhibits GSK3B kinase activity. Post-translationally, phosphorylated by GSK3B. In terms of tissue distribution, detected in heart, brain, placenta, liver, skeletal muscle, kidney, testis, lung and pancreas.

It localises to the cytoplasm. The protein localises to the nucleus. Its function is as follows. A-kinase anchoring protein for GSK3B and PKA that regulates or facilitates their kinase activity towards their targets. The ternary complex enhances Wnt-induced signaling by facilitating the GSK3B- and PKA-induced phosphorylation of beta-catenin leading to beta-catenin degradation and stabilization respectively. Upon cAMP activation, the ternary complex contributes to neuroprotection against oxidative stress-induced apoptosis by facilitating the PKA-induced phosphorylation of DML1 and PKA-induced inactivation of GSK3B. During neurite outgrowth promotes neuron proliferation; while increases beta-catenin-induced transcriptional activity through GSK3B kinase activity inhibition, reduces N-cadherin level to promote cell cycle progression. The protein is GSK3B-interacting protein of Homo sapiens (Human).